The following is a 220-amino-acid chain: Octanoyltransferase (220 aa).

A BPL/LPL catalytic domain is found at 31-206; that stretch reads DDTPDEVWLV…ELVTLLDYEQ (176 aa). Residues 70–77, 137–139, and 150–152 each bind substrate; these read RGGQVTYH, SLG, and GLA. Cys168 serves as the catalytic Acyl-thioester intermediate.

The protein belongs to the LipB family.

The protein localises to the cytoplasm. It catalyses the reaction octanoyl-[ACP] + L-lysyl-[protein] = N(6)-octanoyl-L-lysyl-[protein] + holo-[ACP] + H(+). Its pathway is protein modification; protein lipoylation via endogenous pathway; protein N(6)-(lipoyl)lysine from octanoyl-[acyl-carrier-protein]: step 1/2. Catalyzes the transfer of endogenously produced octanoic acid from octanoyl-acyl-carrier-protein onto the lipoyl domains of lipoate-dependent enzymes. Lipoyl-ACP can also act as a substrate although octanoyl-ACP is likely to be the physiological substrate. The protein is Octanoyltransferase of Vibrio campbellii (strain ATCC BAA-1116).